The primary structure comprises 198 residues: MDAILNYRPEGSEDYYALLGCDELSSVEQILAEFKIRALECHPDKHPENSKAVETFQKLQKAKEILCNAESRARYDHWRRSQMSMPFEQWEALADSVKTSMHWAVRSKKDLMLEGSGQTFTSSVPNKERSEQRETKKGDPDSNPEKMKQKEPKFPEEGISPQNPDSPGLSDLNCGHLRFRWSGDAPSELLRKFRNYEI.

Met-1 carries the N-acetylmethionine modification. The region spanning 14–79 is the J domain; the sequence is DYYALLGCDE…ESRARYDHWR (66 aa). The tract at residues 114-177 is disordered; sequence EGSGQTFTSS…GLSDLNCGHL (64 aa). Residues 116 to 125 show a composition bias toward polar residues; the sequence is SGQTFTSSVP. Over residues 126-156 the composition is skewed to basic and acidic residues; that stretch reads NKERSEQRETKKGDPDSNPEKMKQKEPKFPE. Ser-160, Ser-166, and Ser-182 each carry phosphoserine.

In terms of assembly, interacts with HSPA8. Interacts with TPH1. Interacts with TPH2. In terms of tissue distribution, highest levels of expression are detected in kidney, pineal gland, and raphe nuclei in the brain where it localizes to serotonerigic neurons.

Its subcellular location is the cytoplasm. In terms of biological role, probable co-chaperone that participates in the proper folding of biopterin-dependent aromatic amino acid hydroxylases, which include phenylalanine-4-hydroxylase (PAH), tyrosine 3-monooxygenase (TH) and peripheral and neuronal tryptophan hydroxylases (TPH1 and TPH2). The chain is DnaJ homolog subfamily C member 12 (Dnajc12) from Mus musculus (Mouse).